The chain runs to 440 residues: Thymidine phosphorylase (440 aa).

This sequence belongs to the thymidine/pyrimidine-nucleoside phosphorylase family. Homodimer.

The enzyme catalyses thymidine + phosphate = 2-deoxy-alpha-D-ribose 1-phosphate + thymine. Its pathway is pyrimidine metabolism; dTMP biosynthesis via salvage pathway; dTMP from thymine: step 1/2. The enzymes which catalyze the reversible phosphorolysis of pyrimidine nucleosides are involved in the degradation of these compounds and in their utilization as carbon and energy sources, or in the rescue of pyrimidine bases for nucleotide synthesis. The chain is Thymidine phosphorylase from Burkholderia pseudomallei (strain K96243).